Reading from the N-terminus, the 206-residue chain is Ribosomal RNA large subunit methyltransferase E (206 aa).

The S-adenosyl-L-methionine site is built by Gly60, Trp62, Asp80, Asp96, and Asp121. Lys161 functions as the Proton acceptor in the catalytic mechanism.

It belongs to the class I-like SAM-binding methyltransferase superfamily. RNA methyltransferase RlmE family.

The protein resides in the cytoplasm. The enzyme catalyses uridine(2552) in 23S rRNA + S-adenosyl-L-methionine = 2'-O-methyluridine(2552) in 23S rRNA + S-adenosyl-L-homocysteine + H(+). Specifically methylates the uridine in position 2552 of 23S rRNA at the 2'-O position of the ribose in the fully assembled 50S ribosomal subunit. The sequence is that of Ribosomal RNA large subunit methyltransferase E from Hahella chejuensis (strain KCTC 2396).